The chain runs to 483 residues: Glutamyl-tRNA(Gln) amidotransferase subunit A (483 aa).

Catalysis depends on charge relay system residues Lys77 and Ser152. The active-site Acyl-ester intermediate is the Ser176.

Belongs to the amidase family. GatA subfamily. Heterotrimer of A, B and C subunits.

It carries out the reaction L-glutamyl-tRNA(Gln) + L-glutamine + ATP + H2O = L-glutaminyl-tRNA(Gln) + L-glutamate + ADP + phosphate + H(+). Its function is as follows. Allows the formation of correctly charged Gln-tRNA(Gln) through the transamidation of misacylated Glu-tRNA(Gln) in organisms which lack glutaminyl-tRNA synthetase. The reaction takes place in the presence of glutamine and ATP through an activated gamma-phospho-Glu-tRNA(Gln). In Listeria welshimeri serovar 6b (strain ATCC 35897 / DSM 20650 / CCUG 15529 / CIP 8149 / NCTC 11857 / SLCC 5334 / V8), this protein is Glutamyl-tRNA(Gln) amidotransferase subunit A.